Consider the following 162-residue polypeptide: Glycine cleavage system H protein, mitochondrial (162 aa).

The transit peptide at M1–F31 directs the protein to the mitochondrion. Residues V53 to K135 enclose the Lipoyl-binding domain. K94 is subject to N6-lipoyllysine.

It belongs to the GcvH family. The glycine cleavage system is composed of four proteins: P, T, L and H. Requires (R)-lipoate as cofactor.

The protein resides in the mitochondrion. In terms of biological role, the glycine cleavage system catalyzes the degradation of glycine. The H protein shuttles the methylamine group of glycine from the P protein to the T protein. This is Glycine cleavage system H protein, mitochondrial (GDCSH) from Flaveria pringlei.